Consider the following 522-residue polypeptide: Stellatic acid synthase (522 aa).

The helical transmembrane segment at 23–43 threads the bilayer; it reads IYGIYEPLLALFAVYSVAVVV. 2 N-linked (GlcNAc...) asparagine glycosylation sites follow: Asn267 and Asn451. Position 464 (Cys464) interacts with heme. A glycan (N-linked (GlcNAc...) asparagine) is linked at Asn495.

It belongs to the cytochrome P450 family. It depends on heme as a cofactor.

It is found in the membrane. The catalysed reaction is stellata-2,6,19-triene + 3 reduced [NADPH--hemoprotein reductase] + 3 O2 = stellatate + 3 oxidized [NADPH--hemoprotein reductase] + 4 H2O + 4 H(+). It participates in secondary metabolite biosynthesis; terpenoid biosynthesis. Cytochrome P450 monooxygenase; part of the gene cluster that mediates the biosynthesis of the sesterterpene stellatic acid. The first step in the pathway is performed by the stellatatriene synthase that possesses both prenyl transferase and terpene cyclase activity, converting isopentenyl diphosphate and dimethylallyl diphosphate into geranylgeranyl diphosphate (GGDP) and then converting GGDP into stellata-2,6,19-triene. The cytochrome P450 monooxygenase Stl-P450 then catalyzes three successive oxidation reactions on the C-20 methyl group to generate the carboxylic acid of stellatic acid. The sequence is that of Stellatic acid synthase from Emericella variicolor (Aspergillus stellatus).